Here is a 754-residue protein sequence, read N- to C-terminus: Bifunctional sesterterpene synthase astC (754 aa).

The signal sequence occupies residues 1 to 24 (MASLEVFVLYLRIFFISFMSRARS). The segment at 58–388 (IQYRHSKLVD…RYHFHKPEHW (331 aa)) is sesterterpene synthase. The Mg(2+) site is built by Asp-149 and Asp-153. Positions 389-753 (RQVENVDDDG…LRLLLKRLHV (365 aa)) are geranylfarnesyl diphosphate synthase. Positions 392 to 403 (ENVDDDGNKSDD) are enriched in basic and acidic residues. Positions 392–414 (ENVDDDGNKSDDSGIAMKDSPES) are disordered. The Mg(2+) site is built by Asp-512 and Asp-516.

In the N-terminal section; belongs to the terpene synthase family. This sequence in the C-terminal section; belongs to the FPP/GGPP synthase family. Requires Mg(2+) as cofactor.

The enzyme catalyses (2E,6E,10E,14E)-geranylfarnesyl diphosphate = preasperterpenoid A + diphosphate. The protein operates within secondary metabolite biosynthesis; terpenoid biosynthesis. Functionally, bifunctional sesterterpene synthase; part of the gene cluster that mediates the biosynthesis of the asperterpenoids, sesterterpenes that exhibit anti-tuberculosis activity. The first step of the pathway is performed by the sesterterpene synthase astC that possesses both prenyl transferase and terpene cyclase activity, converting isopentenyl diphosphate and dimethylallyl diphosphate into geranylfarnesyl diphosphate (GFPP) and further converting GFPP into preasperterpenoid A, respectively. The cytochrome P450 monooxygenase astB then dually oxidizes preasperterpenoid A to produce asperterpenoid A along with a minor product, asperterpenoid B. Finally, the cytochrome P450 monooxygenase astA converts asperterpenoid A into asperterpenoid C. The sequence is that of Bifunctional sesterterpene synthase astC from Talaromyces wortmannii (Penicillium wortmannii).